The following is a 570-amino-acid chain: Nucleoprotein (570 aa).

The segment at Met54–Val241 is binding site for the cap structure m7GTP. Residues Ile342–Gly361 are disordered. The Mn(2+) site is built by Asp390 and Glu392. Zn(2+) contacts are provided by Glu400, Cys507, His510, and Cys530. Asp534 contributes to the Mn(2+) binding site.

Belongs to the arenaviridae nucleocapsid protein family. Homomultimerizes to form the nucleocapsid. Binds to viral genomic RNA. Interacts with glycoprotein G2. Interacts with protein Z; this interaction probably directs the encapsidated genome to budding sites. Interacts with protein L; this interaction does not interfere with Z-L interaction. Interacts with host IKBKE (via Protein kinase domain); the interaction inhibits IKBKE kinase activity.

It localises to the virion. Its subcellular location is the host cytoplasm. Its function is as follows. Encapsidates the genome, protecting it from nucleases. The encapsidated genomic RNA is termed the nucleocapsid (NC). Serves as template for viral transcription and replication. The increased presence of protein N in host cell does not seem to trigger the switch from transcription to replication as observed in other negative strain RNA viruses. Through the interaction with host IKBKE, strongly inhibits the phosphorylation and nuclear translocation of host IRF3, a protein involved in interferon activation pathway, leading to the inhibition of interferon-beta and IRF3-dependent promoters activation. Also encodes a functional 3'-5' exoribonuclease that degrades preferentially dsRNA substrates and thereby participates in the suppression of interferon induction. This is Nucleoprotein from Praomys (African soft-furred rats).